We begin with the raw amino-acid sequence, 97 residues long: uncharacterized protein (97 aa).

This sequence to B.licheniformis xpaL1 and to B.subtilis XhlA.

This is an uncharacterized protein from Bacillus licheniformis.